A 607-amino-acid polypeptide reads, in one-letter code: UvrABC system protein C (607 aa).

One can recognise a GIY-YIG domain in the interval 14–93 (HKPGVYLMLD…IKKHKPRYNI (80 aa)). Residues 203-238 (RDLLAELKRQMLQASERLNFEQAGQFRDQIRALKTT) enclose the UVR domain.

It belongs to the UvrC family. As to quaternary structure, interacts with UvrB in an incision complex.

The protein localises to the cytoplasm. Its function is as follows. The UvrABC repair system catalyzes the recognition and processing of DNA lesions. UvrC both incises the 5' and 3' sides of the lesion. The N-terminal half is responsible for the 3' incision and the C-terminal half is responsible for the 5' incision. The chain is UvrABC system protein C from Desulfotalea psychrophila (strain LSv54 / DSM 12343).